We begin with the raw amino-acid sequence, 339 residues long: Sulfate/thiosulfate import ATP-binding protein CysA (339 aa).

Residues Ile3–Val237 form the ABC transporter domain. Gly35–Thr42 lines the ATP pocket.

The protein belongs to the ABC transporter superfamily. Sulfate/tungstate importer (TC 3.A.1.6) family. In terms of assembly, the complex is composed of two ATP-binding proteins (CysA), two transmembrane proteins (CysT and CysW) and a solute-binding protein (CysP).

It is found in the cell inner membrane. It catalyses the reaction sulfate(out) + ATP + H2O = sulfate(in) + ADP + phosphate + H(+). The catalysed reaction is thiosulfate(out) + ATP + H2O = thiosulfate(in) + ADP + phosphate + H(+). In terms of biological role, part of the ABC transporter complex CysAWTP involved in sulfate/thiosulfate import. Responsible for energy coupling to the transport system. The polypeptide is Sulfate/thiosulfate import ATP-binding protein CysA (Caulobacter vibrioides (strain ATCC 19089 / CIP 103742 / CB 15) (Caulobacter crescentus)).